The chain runs to 58 residues: COP9 signalosome complex subunit 6b (58 aa).

This sequence belongs to the peptidase M67A family. CSN6 subfamily. Component of the CSN complex, probably composed of CSN1, CSN2, CSN3, CSN4, CSN5 (CSN5A or CSN5B), CSN6 (CSN6A or CSN6B), CSN7 and CSN8.

The protein localises to the cytoplasm. Its subcellular location is the nucleus. In terms of biological role, component of the COP9 signalosome complex (CSN), a complex involved in various cellular and developmental processes such as photomorphogenesis and auxin and jasmonate responses. The CSN complex is an essential regulator of the ubiquitin (Ubl) conjugation pathway by mediating the deneddylation of the cullin subunits of SCF-type E3 ligase complexes, leading to decrease the Ubl ligase activity of SCF. It is involved in repression of photomorphogenesis in darkness by regulating the activity of COP1-containing Ubl ligase complexes. The polypeptide is COP9 signalosome complex subunit 6b (CSN6B) (Brassica oleracea (Wild cabbage)).